A 484-amino-acid polypeptide reads, in one-letter code: Ferrochelatase-2, chloroplastic (484 aa).

It belongs to the ferrochelatase family.

The protein resides in the plastid. It is found in the chloroplast. It catalyses the reaction heme b + 2 H(+) = protoporphyrin IX + Fe(2+). It participates in porphyrin-containing compound metabolism; protoheme biosynthesis; protoheme from protoporphyrin-IX: step 1/1. Catalyzes the ferrous insertion into protoporphyrin IX. This is Ferrochelatase-2, chloroplastic (HEMH) from Hordeum vulgare (Barley).